A 108-amino-acid polypeptide reads, in one-letter code: Glutaredoxin-1 (108 aa).

The 104-residue stretch at 3–106 (EEFVQQRLTN…DILSSIGVLR (104 aa)) folds into the Glutaredoxin domain. A disulfide bridge connects residues Cys-23 and Cys-26.

Belongs to the glutaredoxin family.

The protein localises to the virion. In terms of biological role, displays thioltransferase and dehydroascorbate reductase activities. The protein is Glutaredoxin-1 (OPG075) of Variola virus (isolate Human/India/Ind3/1967) (VARV).